We begin with the raw amino-acid sequence, 914 residues long: Probable UDP-N-acetylglucosamine--peptide N-acetylglucosaminyltransferase SPINDLY (914 aa).

The segment at 1–39 (MVGLEDDTERERSPVVENGFSNGSRSSSSSAGVLSPSRK) is disordered. Positions 19–37 (GFSNGSRSSSSSAGVLSPS) are enriched in low complexity. At S35 the chain carries Phosphoserine. TPR repeat units follow at residues 43–76 (GNDTLSYANILRARNKFADALALYEAMLEKDSKN), 77–110 (VEAHIGKGICLQTQNKGNLAFDCFSEAIRLDPHN), 112–144 (CALTHCGILHKEEGRLVEAAESYQKALMADASY), 152–185 (AIVLTDLGTSLKLAGNTQEGIQKYYEALKIDPHY), 186–219 (APAYYNLGVVYSEMMQYDNALSCYEKAALERPMY), 220–253 (AEAYCNMGVIYKNRGDLEMAITCYERCLAVSPNF), 261–294 (AIALTDLGTKVKLEGDVTQGVAYYKKALYYNWHY), 295–328 (ADAMYNLGVAYGEMLKFDMAIVFYELAFHFNPHC), 329–362 (AEACNNLGVLYKDRDNLDKAVECYQMALSIKPNF), 364–396 (QSLNNLGVVYTVQGKMDAAASMIEKAILANPTY), and 397–430 (AEAFNNLGVLYRDAGNITMAIDAYEECLKIDPDS). Residues 431 to 914 (RNAGQNRLLA…QLSKRMDSTS (484 aa)) are catalytic region. Residues 866 to 914 (PLISKDLGPSRVSVTGEATPSLKANGSAPVPSSLPTQSPQLSKRMDSTS) are disordered. Positions 877 to 889 (VSVTGEATPSLKA) are enriched in polar residues. Low complexity predominate over residues 894–907 (PVPSSLPTQSPQLS).

Belongs to the glycosyltransferase 41 family. O-GlcNAc transferase subfamily. Homomultimer; via its TPR repeats. Interacts with GI. Interacts with TCP14 and TCP15. Interacts (via N-terminus) with APRR5. Interacts with CPN20. Widely expressed. Present throughout the plant (at protein level).

The protein localises to the cytoplasm. It localises to the nucleus. The enzyme catalyses L-seryl-[protein] + UDP-N-acetyl-alpha-D-glucosamine = 3-O-(N-acetyl-beta-D-glucosaminyl)-L-seryl-[protein] + UDP + H(+). The catalysed reaction is L-threonyl-[protein] + UDP-N-acetyl-alpha-D-glucosamine = 3-O-(N-acetyl-beta-D-glucosaminyl)-L-threonyl-[protein] + UDP + H(+). It catalyses the reaction L-seryl-[protein] + GDP-beta-L-fucose = 3-O-(alpha-L-fucosyl)-L-seryl-[protein] + GDP + H(+). It carries out the reaction L-threonyl-[protein] + GDP-beta-L-fucose = 3-O-(alpha-L-fucosyl)-L-threonyl-[protein] + GDP + H(+). Its pathway is protein modification; protein glycosylation. Functionally, probable O-linked N-acetylglucosamine transferase (OGT) involved in various processes such as gibberellin (GA) signaling pathway and circadian clock. OGTs catalyze the addition of nucleotide-activated sugars directly onto the polypeptide through O-glycosidic linkage with the hydroxyl of serine or threonine. Probably acts by adding O-linked sugars to yet unknown proteins. Acts as a repressor of GA signaling pathway to inhibit hypocotyl elongation. Functions with GIGANTEA (GI) in pathways controlling flowering, circadian cotyledon movements and hypocotyl elongation. Acts as a light-regulated promoter of elongation via its interaction with GI. Acts as an activator of cytokinin signaling. Required with SEC for gamete and seed development. Its OGT activity has been proved in vitro but not in vivo. Possesses O-fucosyltransferase activity on specific serine and threonine residues. Mediates O-fucosylation of the DELLA protein RGA, a repressor of the GA signaling pathway. O-fucosylation enhances RGA activity by promoting RGA binding to key transcription factors in brassinosteroid and light-signaling pathways. Regulates root hair patterning upstream of the transcription factor WER, independently of DELLA proteins and GA signaling. Involved in abscisic acid (ABA) signaling partly through functional ABAR. Mediates O-fucosylation of CPN20 that may depress ABA responses during seed germination and seedling development. Involved in the modulation of the pace of the circadian clock by mediating O-fucosylation of APRR5, one of the core circadian clock components. O-fucosylation promotes APRR5 proteolysis. In Arabidopsis thaliana (Mouse-ear cress), this protein is Probable UDP-N-acetylglucosamine--peptide N-acetylglucosaminyltransferase SPINDLY.